The chain runs to 394 residues: Imidazolonepropionase (394 aa).

The Fe(3+) site is built by His-61 and His-63. Zn(2+)-binding residues include His-61 and His-63. 4-imidazolone-5-propanoate is bound by residues Arg-70, Tyr-133, and His-164. Tyr-133 serves as a coordination point for N-formimidoyl-L-glutamate. His-225 is a binding site for Fe(3+). His-225 contacts Zn(2+). Position 228 (Glu-228) interacts with 4-imidazolone-5-propanoate. Fe(3+) is bound at residue Asp-299. Asp-299 contributes to the Zn(2+) binding site.

The protein belongs to the metallo-dependent hydrolases superfamily. HutI family. It depends on Zn(2+) as a cofactor. Fe(3+) serves as cofactor.

The protein resides in the cytoplasm. It carries out the reaction 4-imidazolone-5-propanoate + H2O = N-formimidoyl-L-glutamate. Its pathway is amino-acid degradation; L-histidine degradation into L-glutamate; N-formimidoyl-L-glutamate from L-histidine: step 3/3. Its function is as follows. Catalyzes the hydrolytic cleavage of the carbon-nitrogen bond in imidazolone-5-propanoate to yield N-formimidoyl-L-glutamate. It is the third step in the universal histidine degradation pathway. This is Imidazolonepropionase from Picrophilus torridus (strain ATCC 700027 / DSM 9790 / JCM 10055 / NBRC 100828 / KAW 2/3).